A 217-amino-acid polypeptide reads, in one-letter code: 3-demethoxyubiquinol 3-hydroxylase (217 aa).

Residues Glu-66, Glu-96, His-99, Glu-148, Glu-180, and His-183 each contribute to the Fe cation site.

The protein belongs to the COQ7 family. It depends on Fe cation as a cofactor.

Its subcellular location is the cell membrane. It catalyses the reaction a 5-methoxy-2-methyl-3-(all-trans-polyprenyl)benzene-1,4-diol + AH2 + O2 = a 3-demethylubiquinol + A + H2O. It participates in cofactor biosynthesis; ubiquinone biosynthesis. Catalyzes the hydroxylation of 2-nonaprenyl-3-methyl-6-methoxy-1,4-benzoquinol during ubiquinone biosynthesis. The chain is 3-demethoxyubiquinol 3-hydroxylase from Xanthomonas oryzae pv. oryzae (strain MAFF 311018).